A 223-amino-acid chain; its full sequence is 7-cyano-7-deazaguanine synthase (223 aa).

15-25 (FSGGQDSTTCL) contributes to the ATP binding site. The Zn(2+) site is built by Cys-191, Cys-200, Cys-203, and Cys-206.

This sequence belongs to the QueC family. In terms of assembly, homodimer. Zn(2+) is required as a cofactor.

The enzyme catalyses 7-carboxy-7-deazaguanine + NH4(+) + ATP = 7-cyano-7-deazaguanine + ADP + phosphate + H2O + H(+). It participates in purine metabolism; 7-cyano-7-deazaguanine biosynthesis. Functionally, catalyzes the ATP-dependent conversion of 7-carboxy-7-deazaguanine (CDG) to 7-cyano-7-deazaguanine (preQ(0)). In Staphylococcus epidermidis (strain ATCC 35984 / DSM 28319 / BCRC 17069 / CCUG 31568 / BM 3577 / RP62A), this protein is 7-cyano-7-deazaguanine synthase.